Here is a 648-residue protein sequence, read N- to C-terminus: Activatory protein CHA4 (648 aa).

The segment covering 1 to 10 (MMLEPSPPPL) has biased composition (pro residues). The disordered stretch occupies residues 1–37 (MMLEPSPPPLTTTVTPSLPSSLKKSVTDNDQNNNNVP). Low complexity predominate over residues 11–22 (TTTVTPSLPSSL). The segment at residues 44–70 (CQNCRRRRRKCNMEKPCSNCIKFRTEC) is a DNA-binding region (zn(2)-C6 fungal-type). Residues 140 to 177 (AQSALPSSESNDENESDAFTKKMPSESPPPVGTNSIYP) are disordered. Residues Ser164 and Ser166 each carry the phosphoserine modification.

The protein resides in the nucleus. In terms of biological role, activates the CHA1 gene for L-serine dehydratase. Binds to the DNA sequence 5'-GVGGARAYRTRATTCCRC-3'. The polypeptide is Activatory protein CHA4 (CHA4) (Saccharomyces cerevisiae (strain ATCC 204508 / S288c) (Baker's yeast)).